The primary structure comprises 302 residues: Single-stranded DNA-binding protein (302 aa).

The LAST stretch occupies residues 3 to 7 (KRKST). Residues His-65, Cys-78, Cys-88, and Cys-91 each coordinate Zn(2+). Positions 273–302 (TKTEDDFMSSSSGSSSSADDTDLDDLLNDL) are disordered. Residues 280 to 290 (MSSSSGSSSSA) show a composition bias toward low complexity. Acidic residues predominate over residues 291–302 (DDTDLDDLLNDL).

Belongs to the Tequatrovirus single-stranded DNA-binding protein family. Homodimer in the absence of DNA, monomer when binding DNA. Interacts with the DNA helicase assembly protein; a ternary complex between the helicase assembly protein, the single-stranded DNA-binding protein and ssDNA is an obligatory intermediate in the helicase loading mechanism. Part of the replicase complex that includes the DNA polymerase, the polymerase clamp, the clamp loader complex, the single-stranded DNA binding protein, the primase, the DnaB-like SF4 replicative helicase and the helicase assembly factor. Interacts (via C-terminus) with the viral SF1 dDA helicase. Interacts with the viral SF2 UvsW repair helicase.

In terms of biological role, single-stranded DNA-binding protein that participates in viral DNA replication, recombination, and repair. Coats the lagging-strand ssDNA as the replication fork advances. Stimulates the activities of viral DNA polymerase and DnaB-like SF4 replicative helicase, probably via its interaction with the helicase assembly factor. Together with DnaB-like SF4 replicative helicase and the helicase assembly factor, promotes pairing of two homologous DNA molecules containing complementary single-stranded regions and mediates homologous DNA strand exchange. Also promotes the formation of joint molecules. mRNA specific autogenous translational repressor. The polypeptide is Single-stranded DNA-binding protein (Escherichia coli (Bacteriophage T2)).